Consider the following 223-residue polypeptide: Putative germin-like protein 2-2 (223 aa).

The first 28 residues, 1-28, serve as a signal peptide directing secretion; that stretch reads MAAVGACFLQQLAVVALLALWCSHGAIA. C38 and C53 form a disulfide bridge. The Cupin type-1 domain maps to 67 to 217; the sequence is SGLHMAGNTT…AFQVDKNIID (151 aa). N-linked (GlcNAc...) asparagine glycans are attached at residues N74 and N82. The Mn(2+) site is built by H115, H117, E122, and H163. A glycan (N-linked (GlcNAc...) asparagine) is linked at N168.

It belongs to the germin family. In terms of assembly, oligomer (believed to be a pentamer but probably hexamer).

The protein localises to the secreted. The protein resides in the extracellular space. It localises to the apoplast. May play a role in plant defense. Probably has no oxalate oxidase activity even if the active site is conserved. This is Putative germin-like protein 2-2 from Oryza sativa subsp. japonica (Rice).